The following is an 85-amino-acid chain: MAKPDIHPKWYPEAKVYCDGEVVMTVGSTQEELHVDVWSGNHPFFTGTQKIIDTEGRVERFMRKYGMSESQGAGGKGNAKKKDEK.

The tract at residues 64 to 85 (KYGMSESQGAGGKGNAKKKDEK) is disordered.

It belongs to the bacterial ribosomal protein bL31 family. Type A subfamily. In terms of assembly, part of the 50S ribosomal subunit.

In terms of biological role, binds the 23S rRNA. In Acaryochloris marina (strain MBIC 11017), this protein is Large ribosomal subunit protein bL31.